The sequence spans 599 residues: Elongation factor 4 (599 aa).

The region spanning 5–187 (SHIRNFSIIA…RLVQSIPAPE (183 aa)) is the tr-type G domain. GTP is bound by residues 17-22 (DHGKST) and 134-137 (NKMD).

The protein belongs to the TRAFAC class translation factor GTPase superfamily. Classic translation factor GTPase family. LepA subfamily.

It is found in the cell inner membrane. It catalyses the reaction GTP + H2O = GDP + phosphate + H(+). Functionally, required for accurate and efficient protein synthesis under certain stress conditions. May act as a fidelity factor of the translation reaction, by catalyzing a one-codon backward translocation of tRNAs on improperly translocated ribosomes. Back-translocation proceeds from a post-translocation (POST) complex to a pre-translocation (PRE) complex, thus giving elongation factor G a second chance to translocate the tRNAs correctly. Binds to ribosomes in a GTP-dependent manner. The protein is Elongation factor 4 of Pseudomonas entomophila (strain L48).